The primary structure comprises 261 residues: Hemin import ATP-binding protein HmuV (261 aa).

An ABC transporter domain is found at 5–241; it reads YTAENLTFTR…DALAHWYGAQ (237 aa). Residue 37–44 coordinates ATP; the sequence is GPNGAGKS.

The protein belongs to the ABC transporter superfamily. Heme (hemin) importer (TC 3.A.1.14.5) family. The complex is composed of two ATP-binding proteins (HmuV), two transmembrane proteins (HmuU) and a solute-binding protein (HmuT).

Its subcellular location is the cell inner membrane. Functionally, part of the ABC transporter complex HmuTUV involved in hemin import. Responsible for energy coupling to the transport system. The protein is Hemin import ATP-binding protein HmuV of Enterobacter cloacae.